We begin with the raw amino-acid sequence, 104 residues long: MSYAIFKHGGKQYKVVEGDIVLLDKMDKEPKALVELVEVLAVSKEGKLSFGKPFVNGAKIEAEVINEGRGKKVITFKKRRRKDSKTKRGFRRDFTRVRITKIVA.

This sequence belongs to the bacterial ribosomal protein bL21 family. As to quaternary structure, part of the 50S ribosomal subunit. Contacts protein L20.

In terms of biological role, this protein binds to 23S rRNA in the presence of protein L20. This chain is Large ribosomal subunit protein bL21, found in Helicobacter pylori (strain HPAG1).